The sequence spans 868 residues: Hopanoid transporter HpnN (868 aa).

12 helical membrane passes run 16-36 (FAAF…FYTY), 273-293 (GAVV…WMAL), 298-318 (IIFA…AVGL), 326-346 (LLSI…GIQF), 370-390 (YSAV…LSFL), 403-423 (IAGA…PALL), 452-472 (IAII…LYFM), 710-730 (IVAS…ILLW), 740-760 (ALTL…CVLI), 762-782 (LPLN…GVAF), 805-825 (AIFF…LSSH), and 834-854 (LLAL…PALM). Residues 299-425 (IFAVAANLVI…ITVLPALLKL (127 aa)) enclose the SSD domain.

This sequence belongs to the resistance-nodulation-cell division (RND) (TC 2.A.6) family. MmpL subfamily.

It is found in the cell inner membrane. Essential for hopanoid transport from the cytoplasmic to the outer membrane. Required for the C(35) hopanoid, bacteriohopanetetrol, to remain localized to the mother cell type. The polypeptide is Hopanoid transporter HpnN (Rhodopseudomonas palustris (strain TIE-1)).